The primary structure comprises 379 residues: MAKRDYYEVLGISKDASKDEIKKAYRKLSKKYHPDINKEEGADEKFKEISEAYEVLSDDNKRATIDQFGHDGPQGFGGQGFNGSDFGGFSGFGGGGFEDIFSSFFGGGSQRDPNAPQKGDDLQYTMTLTFEEAVFGTTKEISIRKDVTCETCHGDGAKPGTSKKTCSYCNGAGHVAVEQNTILGRVRTEQVCPKCNGSGQEFEEACPTCHGKGTENKTVKLEVKVPEGVDNEQQIRLAGEGSPGVNGGPAGDLYVVFRVKPSETFKRDGDDIYYKLNVSFPQAALGDEIKIPTLNNEVMLTIPAGTQTGKQFRLKEKGIKNVHGYGYGDLYVDIKVVTPTKLTDRQKELMKEFAQLNGEEINEQPSNFKDRAKRFFKGE.

The 65-residue stretch at 5–69 (DYYEVLGISK…NKRATIDQFG (65 aa)) folds into the J domain. The segment at 136 to 218 (GTTKEISIRK…CHGKGTENKT (83 aa)) adopts a CR-type zinc-finger fold. The Zn(2+) site is built by Cys149, Cys152, Cys166, Cys169, Cys192, Cys195, Cys206, and Cys209. CXXCXGXG motif repeat units follow at residues 149 to 156 (CETCHGDG), 166 to 173 (CSYCNGAG), 192 to 199 (CPKCNGSG), and 206 to 213 (CPTCHGKG).

It belongs to the DnaJ family. Homodimer. It depends on Zn(2+) as a cofactor.

It is found in the cytoplasm. Its function is as follows. Participates actively in the response to hyperosmotic and heat shock by preventing the aggregation of stress-denatured proteins and by disaggregating proteins, also in an autonomous, DnaK-independent fashion. Unfolded proteins bind initially to DnaJ; upon interaction with the DnaJ-bound protein, DnaK hydrolyzes its bound ATP, resulting in the formation of a stable complex. GrpE releases ADP from DnaK; ATP binding to DnaK triggers the release of the substrate protein, thus completing the reaction cycle. Several rounds of ATP-dependent interactions between DnaJ, DnaK and GrpE are required for fully efficient folding. Also involved, together with DnaK and GrpE, in the DNA replication of plasmids through activation of initiation proteins. This is Chaperone protein DnaJ from Staphylococcus aureus.